Reading from the N-terminus, the 299-residue chain is Bifunctional protein FolD (299 aa).

NADP(+)-binding positions include 169–171 (GRS), serine 194, and isoleucine 235.

It belongs to the tetrahydrofolate dehydrogenase/cyclohydrolase family. Homodimer.

It catalyses the reaction (6R)-5,10-methylene-5,6,7,8-tetrahydrofolate + NADP(+) = (6R)-5,10-methenyltetrahydrofolate + NADPH. The enzyme catalyses (6R)-5,10-methenyltetrahydrofolate + H2O = (6R)-10-formyltetrahydrofolate + H(+). It functions in the pathway one-carbon metabolism; tetrahydrofolate interconversion. In terms of biological role, catalyzes the oxidation of 5,10-methylenetetrahydrofolate to 5,10-methenyltetrahydrofolate and then the hydrolysis of 5,10-methenyltetrahydrofolate to 10-formyltetrahydrofolate. The protein is Bifunctional protein FolD of Trichormus variabilis (strain ATCC 29413 / PCC 7937) (Anabaena variabilis).